A 415-amino-acid chain; its full sequence is 3-isopropylmalate dehydratase large subunit (415 aa).

3 residues coordinate [4Fe-4S] cluster: Cys297, Cys355, and Cys358.

It belongs to the aconitase/IPM isomerase family. LeuC type 2 subfamily. Heterodimer of LeuC and LeuD. The cofactor is [4Fe-4S] cluster.

It carries out the reaction (2R,3S)-3-isopropylmalate = (2S)-2-isopropylmalate. The protein operates within amino-acid biosynthesis; L-leucine biosynthesis; L-leucine from 3-methyl-2-oxobutanoate: step 2/4. Functionally, catalyzes the isomerization between 2-isopropylmalate and 3-isopropylmalate, via the formation of 2-isopropylmaleate. The polypeptide is 3-isopropylmalate dehydratase large subunit (Caldivirga maquilingensis (strain ATCC 700844 / DSM 13496 / JCM 10307 / IC-167)).